Reading from the N-terminus, the 478-residue chain is Cysteine--tRNA ligase (478 aa).

C29 contributes to the Zn(2+) binding site. Positions 31 to 41 (VTVYDYCHLGH) match the 'HIGH' region motif. Zn(2+) is bound by residues C213, H238, and E242. The short motif at 270 to 274 (KMSKS) is the 'KMSKS' region element. K273 provides a ligand contact to ATP.

This sequence belongs to the class-I aminoacyl-tRNA synthetase family. Monomer. Requires Zn(2+) as cofactor.

Its subcellular location is the cytoplasm. The enzyme catalyses tRNA(Cys) + L-cysteine + ATP = L-cysteinyl-tRNA(Cys) + AMP + diphosphate. This Synechococcus sp. (strain ATCC 27144 / PCC 6301 / SAUG 1402/1) (Anacystis nidulans) protein is Cysteine--tRNA ligase.